The sequence spans 798 residues: Peroxisome proliferator-activated receptor gamma coactivator 1-alpha (798 aa).

Lys79 is subject to N6-acetyllysine. Residues 100 to 140 form a disordered region; that stretch reads PVDEDGLPSFDALTDGDVTTDNEASPSSMPDGTPPPQEAEE. Over residues 116-129 the composition is skewed to polar residues; it reads DVTTDNEASPSSMP. The LXXLL motif signature appears at 144–148; sequence LKKLL. Residue Lys146 is modified to N6-acetyllysine. The residue at position 178 (Thr178) is a Phosphothreonine; by AMPK. Residue Lys184 is modified to N6-acetyllysine. Positions 213–277 are disordered; that stretch reads YLTTNDDPPH…NDPKGSPFEN (65 aa). Over residues 219-237 the composition is skewed to basic and acidic residues; sequence DPPHTKPTENRNSSRDKCT. N6-acetyllysine occurs at positions 254, 271, 278, and 321. Residues 290–351 are disordered; sequence GTAGLTPPTT…NNSTKKGPEQ (62 aa). The segment at 293-339 is interaction with PPARG; the sequence is GLTPPTTPPHKANQDNPFRASPKLKSSCKTVVPPPSKKPRYSESSGT. Residues 334-346 are compositionally biased toward polar residues; that stretch reads SESSGTQGNNSTK. An N6-acetyllysine mark is found at Lys347, Lys413, Lys442, and Lys451. A mediates interaction with RNF34 region spans residues 350–798; sequence EQSELYAQLS…LKEAQRSLRR (449 aa). Ser539 is modified (phosphoserine; by AMPK). 3 disordered regions span residues 542 to 599, 613 to 639, and 650 to 669; these read SFNS…SSRS, HRNS…SYEE, and YRRE…ERQR. The segment covering 563–578 has biased composition (basic residues); it reads QRMRSRSRSFSRHRSC. The span at 579-599 shows a compositional bias: low complexity; the sequence is SRSPYSRSRSRSPGSRSSSRS. Residues 622–631 show a composition bias toward basic residues; that stretch reads SRSRSPYSRR. Positions 677–753 constitute an RRM domain; the sequence is RVIYVGKIRP…TDFELYFCGR (77 aa). Residues Lys758 and Lys779 each carry the N6-acetyllysine modification.

In terms of assembly, homooligomer. Interacts with MYBBP1A; inhibits MYBBP1A transcriptional activation. Interacts with PRDM16, LPIN1 and PML. Interacts (via LXXLL motif) with RORA and RORC (via AF-2 motif); activates RORA and RORC transcriptional activation. Interacts with LRPPRC. Interacts with FOXO1. Interacts with NR5A2. Post-translationally, phosphorylation by AMPK in skeletal muscle increases activation of its own promoter. Phosphorylated by CLK2. Heavily acetylated by KAT2A/GCN5 under conditions of high nutrients, leading to inactivation of PPARGC1A. Deacetylated by SIRT1 in low nutrients/high NAD conditions, leading to its activation. In terms of processing, ubiquitinated. Ubiquitination by RNF34 induces proteasomal degradation. As to expression, heart, skeletal muscle, liver and kidney. Expressed at lower levels in brain and pancreas and at very low levels in the intestine and white adipose tissue. In skeletal muscle, levels were lower in obese than in lean subjects and fasting induced a 2-fold increase in levels in the skeletal muscle in obese subjects.

The protein localises to the nucleus. It localises to the PML body. It is found in the cytoplasm. Transcriptional coactivator for steroid receptors and nuclear receptors. Greatly increases the transcriptional activity of PPARG and thyroid hormone receptor on the uncoupling protein promoter. Can regulate key mitochondrial genes that contribute to the program of adaptive thermogenesis. Plays an essential role in metabolic reprogramming in response to dietary availability through coordination of the expression of a wide array of genes involved in glucose and fatty acid metabolism. Acts as a key regulator of gluconeogenesis: stimulates hepatic gluconeogenesis by increasing the expression of gluconeogenic enzymes, and acting together with FOXO1 to promote the fasting gluconeogenic program. Induces the expression of PERM1 in the skeletal muscle in an ESRRA-dependent manner. Also involved in the integration of the circadian rhythms and energy metabolism. Required for oscillatory expression of clock genes, such as BMAL1 and NR1D1, through the coactivation of RORA and RORC, and metabolic genes, such as PDK4 and PEPCK. The polypeptide is Peroxisome proliferator-activated receptor gamma coactivator 1-alpha (PPARGC1A) (Homo sapiens (Human)).